The primary structure comprises 618 residues: DNA ligase 2 (618 aa).

Over residues 197-208 (DKKTLESREDAK) the composition is skewed to basic and acidic residues. The tract at residues 197–250 (DKKTLESREDAKSVPPASQPEITNKISGDTSPNTSESVQTKKSDPDTSSNVDPS) is disordered. Polar residues predominate over residues 216 to 234 (PEITNKISGDTSPNTSESV). Residue Glu312 coordinates ATP. Catalysis depends on Lys314, which acts as the N6-AMP-lysine intermediate. Residues Arg319, Arg334, Glu363, Phe403, Arg476, and Lys482 each contribute to the ATP site. Residues 459 to 480 (HEGVMLKDPDSTYNPGSRGQHW) are disordered.

The protein belongs to the ATP-dependent DNA ligase family. Mg(2+) is required as a cofactor.

The enzyme catalyses ATP + (deoxyribonucleotide)n-3'-hydroxyl + 5'-phospho-(deoxyribonucleotide)m = (deoxyribonucleotide)n+m + AMP + diphosphate.. Functionally, DNA ligase that seals nicks in double-stranded DNA during DNA replication, DNA recombination and DNA repair. The polypeptide is DNA ligase 2 (Haloquadratum walsbyi (strain DSM 16790 / HBSQ001)).